The chain runs to 651 residues: DNA topoisomerase 3 (651 aa).

In terms of domain architecture, Toprim spans 1 to 134 (MRLFIAEKPS…KRDKILRCLI (134 aa)). Residues glutamate 7, aspartate 103, and aspartate 105 each contribute to the Mg(2+) site. The 458-residue stretch at 155–612 (FIPLATSALA…NLNQILPDLV (458 aa)) folds into the Topo IA-type catalytic domain. The interval 194–199 (SVGRVQ) is interaction with DNA. Residue tyrosine 337 is the O-(5'-phospho-DNA)-tyrosine intermediate of the active site. The tract at residues 631–651 (SDRAKPKSAVKKSSKSNGETD) is disordered.

The protein belongs to the type IA topoisomerase family. The cofactor is Mg(2+).

The catalysed reaction is ATP-independent breakage of single-stranded DNA, followed by passage and rejoining.. Functionally, releases the supercoiling and torsional tension of DNA, which is introduced during the DNA replication and transcription, by transiently cleaving and rejoining one strand of the DNA duplex. Introduces a single-strand break via transesterification at a target site in duplex DNA. The scissile phosphodiester is attacked by the catalytic tyrosine of the enzyme, resulting in the formation of a DNA-(5'-phosphotyrosyl)-enzyme intermediate and the expulsion of a 3'-OH DNA strand. The free DNA strand then undergoes passage around the unbroken strand, thus removing DNA supercoils. Finally, in the religation step, the DNA 3'-OH attacks the covalent intermediate to expel the active-site tyrosine and restore the DNA phosphodiester backbone. The protein is DNA topoisomerase 3 of Haemophilus influenzae (strain ATCC 51907 / DSM 11121 / KW20 / Rd).